We begin with the raw amino-acid sequence, 561 residues long: Dihydroxy-acid dehydratase 3 (561 aa).

[2Fe-2S] cluster is bound at residue cysteine 50. Residue aspartate 82 coordinates Mg(2+). Cysteine 123 lines the [2Fe-2S] cluster pocket. Positions 124 and 125 each coordinate Mg(2+). Lysine 125 is subject to N6-carboxylysine. Cysteine 195 lines the [2Fe-2S] cluster pocket. Glutamate 447 serves as a coordination point for Mg(2+). Serine 473 (proton acceptor) is an active-site residue.

Belongs to the IlvD/Edd family. As to quaternary structure, homodimer. [2Fe-2S] cluster serves as cofactor. The cofactor is Mg(2+).

It catalyses the reaction (2R)-2,3-dihydroxy-3-methylbutanoate = 3-methyl-2-oxobutanoate + H2O. The enzyme catalyses (2R,3R)-2,3-dihydroxy-3-methylpentanoate = (S)-3-methyl-2-oxopentanoate + H2O. Its pathway is amino-acid biosynthesis; L-isoleucine biosynthesis; L-isoleucine from 2-oxobutanoate: step 3/4. The protein operates within amino-acid biosynthesis; L-valine biosynthesis; L-valine from pyruvate: step 3/4. Functions in the biosynthesis of branched-chain amino acids. Catalyzes the dehydration of (2R,3R)-2,3-dihydroxy-3-methylpentanoate (2,3-dihydroxy-3-methylvalerate) into 2-oxo-3-methylpentanoate (2-oxo-3-methylvalerate) and of (2R)-2,3-dihydroxy-3-methylbutanoate (2,3-dihydroxyisovalerate) into 2-oxo-3-methylbutanoate (2-oxoisovalerate), the penultimate precursor to L-isoleucine and L-valine, respectively. The sequence is that of Dihydroxy-acid dehydratase 3 from Bordetella bronchiseptica (strain ATCC BAA-588 / NCTC 13252 / RB50) (Alcaligenes bronchisepticus).